The primary structure comprises 268 residues: Phosphatidylglycerol--prolipoprotein diacylglyceryl transferase (268 aa).

7 helical membrane-spanning segments follow: residues 23 to 43 (IGLR…RWLA), 62 to 82 (LLFN…VFFY), 97 to 117 (VWEG…AMIW), 132 to 152 (FVAP…FINL), 179 to 199 (SQLY…NIFI), 206 to 226 (ASVA…VEYV), and 241 to 261 (GQAL…WAYS). Arginine 145 serves as a coordination point for a 1,2-diacyl-sn-glycero-3-phospho-(1'-sn-glycerol).

The protein belongs to the Lgt family.

The protein resides in the cell inner membrane. The enzyme catalyses L-cysteinyl-[prolipoprotein] + a 1,2-diacyl-sn-glycero-3-phospho-(1'-sn-glycerol) = an S-1,2-diacyl-sn-glyceryl-L-cysteinyl-[prolipoprotein] + sn-glycerol 1-phosphate + H(+). Its pathway is protein modification; lipoprotein biosynthesis (diacylglyceryl transfer). Catalyzes the transfer of the diacylglyceryl group from phosphatidylglycerol to the sulfhydryl group of the N-terminal cysteine of a prolipoprotein, the first step in the formation of mature lipoproteins. This chain is Phosphatidylglycerol--prolipoprotein diacylglyceryl transferase, found in Haemophilus influenzae (strain 86-028NP).